A 325-amino-acid polypeptide reads, in one-letter code: tRNA(Ile)-lysidine synthase (325 aa).

ATP is bound at residue 34 to 39 (SGGQDS).

The protein belongs to the tRNA(Ile)-lysidine synthase family.

It localises to the cytoplasm. It carries out the reaction cytidine(34) in tRNA(Ile2) + L-lysine + ATP = lysidine(34) in tRNA(Ile2) + AMP + diphosphate + H(+). Its function is as follows. Ligates lysine onto the cytidine present at position 34 of the AUA codon-specific tRNA(Ile) that contains the anticodon CAU, in an ATP-dependent manner. Cytidine is converted to lysidine, thus changing the amino acid specificity of the tRNA from methionine to isoleucine. The chain is tRNA(Ile)-lysidine synthase from Synechococcus sp. (strain ATCC 27144 / PCC 6301 / SAUG 1402/1) (Anacystis nidulans).